Here is a 766-residue protein sequence, read N- to C-terminus: Pumilio domain-containing protein 12 (766 aa).

Disordered regions lie at residues 63–98 (KKSS…KSKK) and 152–197 (AQEE…GDES). Over residues 79–88 (SLCSESSFGS) the composition is skewed to polar residues. Residues 179 to 193 (PADDENLESVDEQAG) show a composition bias toward acidic residues. The region spanning 245–602 (ARAQKCKELW…LYAGITENLY (358 aa)) is the PUM-HD domain. 4 Pumilio repeats span residues 313–348 (ELTP…IIIN), 461–496 (SLKD…LIVK), 497–534 (NFKD…VIVS), and 535–571 (ELAN…REIT).

The chain is Pumilio domain-containing protein 12 (puf-12) from Caenorhabditis elegans.